The following is a 386-amino-acid chain: MQVFWFIPTHGDSRYLGTAEGARPLSHDYVKQVAIAADSLGYEGVLIPTGRSCEDPWVVASSLIPVTRRLKFLVAVRPGLHQPSLAARMAASFDRLSGGRLLINLVTGGDRAELEGDGVFLDHAQRYEQSAEFIRIWREILERSHEGGTLDYEGEHLSVKGAKLLFPPLQKPYPPVYFGGSSEAAHDLAAEQVDAYLTWGEPPAEVAKKIADVREKAARHGRSVKFGIRLHVIVRETEDEAWADADRLISRLKDETVVQAQAAFARMDSEGQRRMAALHAGGSRRTRAELEISPNLWAGVGLVRGGAGTALVGDAQTVADRIKEYADLGIDTFVLSGYPHLEEAYRFAELVFPLLPLSVRDRLAGGVGGPLGETVANLYSPRASQS.

Belongs to the SsuD family.

The catalysed reaction is an alkanesulfonate + FMNH2 + O2 = an aldehyde + FMN + sulfite + H2O + 2 H(+). In terms of biological role, catalyzes the desulfonation of aliphatic sulfonates. The protein is Alkanesulfonate monooxygenase of Delftia acidovorans (strain DSM 14801 / SPH-1).